The chain runs to 92 residues: RQC P-site tRNA stabilizing factor (92 aa).

The S4 RNA-binding domain occupies Met5 to Glu65.

The protein belongs to the RqcP family. In terms of assembly, associates with stalled 50S ribosomal subunits. Binds to RqcH, 23S rRNA and the P-site tRNA. Does not require RqcH for association with 50S subunits.

Key component of the ribosome quality control system (RQC), a ribosome-associated complex that mediates the extraction of incompletely synthesized nascent chains from stalled ribosomes and their subsequent degradation. RqcH recruits Ala-charged tRNA, and with RqcP directs the elongation of stalled nascent chains on 50S ribosomal subunits, leading to non-templated C-terminal alanine extensions (Ala tail). The Ala tail promotes nascent chain degradation. RqcP is associated with the translocation-like movement of the peptidyl-tRNA from the A-site into the P-site. In Listeria innocua serovar 6a (strain ATCC BAA-680 / CLIP 11262), this protein is RQC P-site tRNA stabilizing factor.